We begin with the raw amino-acid sequence, 517 residues long: Acetylcholine receptor subunit delta (517 aa).

The N-terminal stretch at 1-21 is a signal peptide; it reads MEGPVLTLGLLAALAVCGSWG. Residues 22-245 lie on the Extracellular side of the membrane; sequence LNEEERLIRH…ITFYLIIRRK (224 aa). 2 N-linked (GlcNAc...) asparagine glycosylation sites follow: Asn-97 and Asn-164. A disulfide bridge connects residues Cys-151 and Cys-165. The next 3 membrane-spanning stretches (helical) occupy residues 246 to 270, 278 to 299, and 312 to 333; these read PLFY…VFYL, TSVA…SKRL, and FLLF…VLNI. At 334–471 the chain is on the cytoplasmic side; the sequence is HFRTPSTHVL…WNRVARTVDR (138 aa). Phosphotyrosine; by Tyr-kinases is present on Tyr-390. The chain crosses the membrane as a helical span at residues 472–490; that stretch reads LCLFVVTPVMVVGTAWIFL.

Belongs to the ligand-gated ion channel (TC 1.A.9) family. Acetylcholine receptor (TC 1.A.9.1) subfamily. Delta/CHRND sub-subfamily. In terms of assembly, pentamer of two alpha chains, and one each of the beta, delta, and gamma (in immature muscle) or epsilon (in mature muscle) chains. The muscle heteropentamer composed of alpha-1, beta-1, delta, epsilon subunits interacts with the alpha-conotoxin ImII.

It localises to the postsynaptic cell membrane. The protein resides in the cell membrane. The catalysed reaction is K(+)(in) = K(+)(out). It carries out the reaction Na(+)(in) = Na(+)(out). Functionally, after binding acetylcholine, the AChR responds by an extensive change in conformation that affects all subunits and leads to opening of an ion-conducting channel across the plasma membrane. This chain is Acetylcholine receptor subunit delta, found in Homo sapiens (Human).